Reading from the N-terminus, the 969-residue chain is Translation initiation factor IF-2 (969 aa).

Residues 49-63 are compositionally biased toward basic and acidic residues; the sequence is HLRKSHGATDGDKRK. Disordered stretches follow at residues 49–85, 100–128, and 143–380; these read HLRK…KART, DDVS…REEE, and LRER…SFQA. The span at 105 to 114 shows a compositional bias: low complexity; sequence VAEQGQAQVA. Over residues 143-181 the composition is skewed to basic and acidic residues; the sequence is LRERQERLEREEAERRAREEAAEAERRRAEEEAAAKRAA. Residues 182-206 are compositionally biased toward low complexity; sequence AEAAAAQQAAQQAAAAQQAAAPADS. A compositionally biased stretch (basic and acidic residues) spans 209 to 260; the sequence is DEARAAAERAAQREAAKKAEDAAREAAEKARAEQEEIRKRREAAEAEARAIR. Positions 301 to 323 are enriched in low complexity; that stretch reads AQARPAAKKPAAAPAATPAPAGA. Residues 353–366 are compositionally biased toward gly residues; that stretch reads SSGGVDRGWRGGPK. The region spanning 469 to 638 is the tr-type G domain; it reads PRPPVVTVMG…LLQAEVLELK (170 aa). The interval 478–485 is G1; it reads GHVDHGKT. GTP is bound at residue 478 to 485; sequence GHVDHGKT. The G2 stretch occupies residues 503-507; that stretch reads GITQH. The G3 stretch occupies residues 524-527; that stretch reads DTPG. GTP is bound by residues 524 to 528 and 578 to 581; these read DTPGH and NKID. Residues 578–581 form a G4 region; the sequence is NKID. The interval 614 to 616 is G5; sequence SAK.

This sequence belongs to the TRAFAC class translation factor GTPase superfamily. Classic translation factor GTPase family. IF-2 subfamily.

Its subcellular location is the cytoplasm. Functionally, one of the essential components for the initiation of protein synthesis. Protects formylmethionyl-tRNA from spontaneous hydrolysis and promotes its binding to the 30S ribosomal subunits. Also involved in the hydrolysis of GTP during the formation of the 70S ribosomal complex. This is Translation initiation factor IF-2 from Burkholderia multivorans (strain ATCC 17616 / 249).